The primary structure comprises 443 residues: Methyl-coenzyme M reductase I subunit beta (443 aa).

Tyr-367 provides a ligand contact to coenzyme M. Gly-369 is a coenzyme B binding site.

The protein belongs to the methyl-coenzyme M reductase beta subunit family. In terms of assembly, MCR is a hexamer of two alpha, two beta, and two gamma chains, forming a dimer of heterotrimers. It depends on coenzyme F430 as a cofactor.

Its subcellular location is the cytoplasm. The catalysed reaction is coenzyme B + methyl-coenzyme M = methane + coenzyme M-coenzyme B heterodisulfide. Its pathway is one-carbon metabolism; methyl-coenzyme M reduction; methane from methyl-coenzyme M: step 1/1. Component of the methyl-coenzyme M reductase (MCR) I that catalyzes the reductive cleavage of methyl-coenzyme M (CoM-S-CH3 or 2-(methylthio)ethanesulfonate) using coenzyme B (CoB or 7-mercaptoheptanoylthreonine phosphate) as reductant which results in the production of methane and the mixed heterodisulfide of CoB and CoM (CoM-S-S-CoB). This is the final step in methanogenesis. The polypeptide is Methyl-coenzyme M reductase I subunit beta (mcrB) (Methanothermobacter thermautotrophicus (strain ATCC 29096 / DSM 1053 / JCM 10044 / NBRC 100330 / Delta H) (Methanobacterium thermoautotrophicum)).